Consider the following 66-residue polypeptide: UPF0434 protein Jann_0424 (66 aa).

It belongs to the UPF0434 family.

The chain is UPF0434 protein Jann_0424 from Jannaschia sp. (strain CCS1).